The primary structure comprises 146 residues: Large ribosomal subunit protein uL15 (146 aa).

A disordered region spans residues 1–54 (MTIKLHDLRPAPGSKTPRTRVGRGEGSKGKTAGRGTKGTKARKQVPTTFEGGQM).

Belongs to the universal ribosomal protein uL15 family. In terms of assembly, part of the 50S ribosomal subunit.

Functionally, binds to the 23S rRNA. In Mycobacterium marinum (strain ATCC BAA-535 / M), this protein is Large ribosomal subunit protein uL15.